Here is a 311-residue protein sequence, read N- to C-terminus: Putative mitochondrial transporter UCP3 (311 aa).

Residues 1 to 10 (MVGLKPSEVP) are Mitochondrial intermembrane-facing. A helical membrane pass occupies residues 11-32 (PTTAVKFLGAGTAACFADLLTF). Solcar repeat units lie at residues 11–105 (PTTA…VKQF), 114–205 (SSIT…IKEK), and 214–299 (DNFP…LKRA). At 33–76 (PLDTAKVRLQIQGENQATQAARRIQYRGVLGTILTMVRTEGPRS) the chain is on the mitochondrial matrix side. A helical transmembrane segment spans residues 77–99 (PYNGLVAGLQRQMSFASIRIGLY). Residues 100–119 (DSVKQFYTPKGSDHSSITTR) lie on the Mitochondrial intermembrane side of the membrane. The helical transmembrane segment at 120–136 (ILAGCTTGAMAVSCAQP) threads the bilayer. Residues 137–182 (TDVVKVRFQASIHLGAGSNRKYSGTMDAYRTIAREEGVRGLWKGTL) lie on the Mitochondrial matrix side of the membrane. The chain crosses the membrane as a helical span at residues 183-199 (PNITRNAIVNCAEMVTY). Residues 200 to 216 (DIIKEKLLDYHLLTDNF) lie on the Mitochondrial intermembrane side of the membrane. A helical membrane pass occupies residues 217–236 (PCHLISAFGAGFCATVVASP). The Mitochondrial matrix segment spans residues 237-270 (VDVVKTRYMNSPPGQYCSPLDCMLKMVTQEGPTA). Residues 271-293 (FYKGFTPSFLRLGTWNVVMFVTY) traverse the membrane as a helical segment. The purine nucleotide binding stretch occupies residues 278 to 300 (SFLRLGTWNVVMFVTYEQLKRAL). Topologically, residues 294–311 (EQLKRALMKVQMLRESPF) are mitochondrial intermembrane.

The protein belongs to the mitochondrial carrier (TC 2.A.29) family. Interacts with HAX1; the interaction is direct and calcium-dependent.

It localises to the mitochondrion inner membrane. Functionally, putative transmembrane transporter that plays a role in mitochondrial metabolism via an as yet unclear mechanism. Originally, this mitochondrial protein was thought to act as a proton transmembrane transporter from the mitochondrial intermembrane space into the matrix, causing proton leaks through the inner mitochondrial membrane, thereby uncoupling mitochondrial membrane potential generation from ATP synthesis. However, this function is controversial and uncoupling may not be the function, or at least not the main function, but rather a consequence of more conventional metabolite transporter activity. This is Putative mitochondrial transporter UCP3 from Canis lupus familiaris (Dog).